Here is a 180-residue protein sequence, read N- to C-terminus: Iron sulfur cluster assembly protein 1, mitochondrial (180 aa).

The protein belongs to the NifU family. As to quaternary structure, component of the core Fe-S cluster (ISC) assembly machinery. Requires [2Fe-2S] cluster as cofactor.

Its subcellular location is the mitochondrion matrix. Its pathway is cofactor biosynthesis; iron-sulfur cluster biosynthesis. Scaffold protein for the de novo synthesis of iron-sulfur (Fe-S) clusters within mitochondria, which is required for maturation of both mitochondrial and cytoplasmic [2Fe-2S] and [4Fe-4S] proteins. First, a [2Fe-2S] cluster is transiently assembled on the scaffold protein ISU1. In a second step, the cluster is released from ISU1, transferred to a glutaredoxin, followed by the formation of mitochondrial [2Fe-2S] proteins, the synthesis of [4Fe-4S] clusters and their target-specific insertion into the recipient apoproteins. Cluster assembly on ISU1 depends on the function of the cysteine desulfurase complex NFS1-ISD11, which serves as the sulfur donor for cluster synthesis, the iron-binding protein frataxin as the putative iron donor, and the electron transfer chain comprised of ferredoxin reductase and ferredoxin, which receive their electrons from NADH. The protein is Iron sulfur cluster assembly protein 1, mitochondrial (ISU1) of Kluyveromyces lactis (strain ATCC 8585 / CBS 2359 / DSM 70799 / NBRC 1267 / NRRL Y-1140 / WM37) (Yeast).